Consider the following 183-residue polypeptide: Proton-transporting V-type ATPase complex assembly regulator TMEM9 (183 aa).

A signal peptide spans 1 to 20 (MKLLSLVAVVGCLLVPPAEA). 3 N-linked (GlcNAc...) asparagine glycosylation sites follow: Asn-21, Asn-38, and Asn-47. The Extracellular segment spans residues 21 to 89 (NKSSEDIRCK…YEERSTTTIK (69 aa)). A helical transmembrane segment spans residues 90–110 (VIIVIYLSVVGALLLYMAFLM). Topologically, residues 111–183 (LVDPLIRKPD…TVFDRHKMLS (73 aa)) are cytoplasmic. Phosphoserine is present on residues Ser-137 and Ser-144.

It belongs to the TMEM9 family. Interacts with the v-ATPase accessory protein ATP6AP2 and with the v-ATPase complex subunit ATP6V0D1; these interactions lead to the assembly of the v-ATPase complex. N-glycosylated. Highly expressed in adrenal gland, thyroid gland, testis, ovary and prostate. Moderate expression in trachea, spinal cord, stomach, colon, small intestine and spleen. Low expression in bone marrow, lymph node, thymus and peripheral blood lymphocytes. Expression is detected in hematopoietic cell lines including those of myeloid, erythroid, B- and T-cell origin.

It is found in the lysosome membrane. Its subcellular location is the late endosome membrane. The protein localises to the endosome. It localises to the multivesicular body membrane. Transmembrane protein that binds to and facilitates the assembly of lysosomal proton-transporting V-type ATPase (v-ATPase), resulting in enhanced lysosomal acidification and trafficking. By bringing the v-ATPase accessory protein ATP6AP2 and the v-ATPase subunit ATP6V0D1 together, allows v-ATPase complex formation and activation. TMEM9-controlled vesicular acidification induces hyperactivation of Wnt/beta-catenin signaling, involved in development, tissue homeostasis and tissue regeneration, through lysosomal degradation of adenomatous polyposis coli/APC. In the liver, involved in hepatic regeneration. The sequence is that of Proton-transporting V-type ATPase complex assembly regulator TMEM9 from Homo sapiens (Human).